Reading from the N-terminus, the 376-residue chain is Glutamate 5-kinase (376 aa).

Lys-15 is an ATP binding site. Substrate-binding residues include Ser-56, Asp-143, and Asn-155. Residue 175-176 coordinates ATP; the sequence is SD. A PUA domain is found at 281 to 358; sequence KGTLTIDAGA…PDVMMILGIT (78 aa).

It belongs to the glutamate 5-kinase family.

The protein resides in the cytoplasm. It carries out the reaction L-glutamate + ATP = L-glutamyl 5-phosphate + ADP. Its pathway is amino-acid biosynthesis; L-proline biosynthesis; L-glutamate 5-semialdehyde from L-glutamate: step 1/2. Catalyzes the transfer of a phosphate group to glutamate to form L-glutamate 5-phosphate. The polypeptide is Glutamate 5-kinase (Rhodopseudomonas palustris (strain TIE-1)).